The following is a 75-amino-acid chain: Conotoxin VnMSGL-0111 (75 aa).

Residues 1 to 20 (MSGLEIMVLTLLLLVSMATS) form the signal peptide. Positions 21–44 (HQDGGEKQATQRDAINVRRRSITR) are excised as a propeptide. Intrachain disulfides connect C48–C60, C52–C69, and C59–C73.

Belongs to the conotoxin O3 superfamily. As to expression, expressed by the venom duct.

It localises to the secreted. This chain is Conotoxin VnMSGL-0111, found in Conus ventricosus (Mediterranean cone).